A 387-amino-acid chain; its full sequence is Phosphoglycerate kinase (387 aa).

Substrate contacts are provided by residues 21 to 23 (DLN), Arg-36, 59 to 62 (HLGR), Arg-113, and Arg-146. ATP is bound by residues Lys-197, Glu-314, and 340–343 (GGDT).

This sequence belongs to the phosphoglycerate kinase family. Monomer.

It is found in the cytoplasm. The catalysed reaction is (2R)-3-phosphoglycerate + ATP = (2R)-3-phospho-glyceroyl phosphate + ADP. It functions in the pathway carbohydrate degradation; glycolysis; pyruvate from D-glyceraldehyde 3-phosphate: step 2/5. The sequence is that of Phosphoglycerate kinase from Aliivibrio salmonicida (strain LFI1238) (Vibrio salmonicida (strain LFI1238)).